A 429-amino-acid polypeptide reads, in one-letter code: 4-hydroxyphenylacetate degradation bifunctional isomerase/decarboxylase (429 aa).

Approximate repeat units lie at residues Met-1–Phe-215 and Thr-216–Asn-429. The a divalent metal cation site is built by Glu-276, Glu-278, and Asp-307.

Belongs to the FAH family. Monomer. The cofactor is Mg(2+).

The catalysed reaction is (2E,4Z)-5-hydroxypenta-2,4-diene-1,2,5-tricarboxylate = (3E,5R)-5-carboxy-2-oxohept-3-enedioate. The enzyme catalyses (3E,5R)-5-carboxy-2-oxohept-3-enedioate + H(+) = (4Z)-2-oxohept-4-enedioate + CO2. It participates in aromatic compound metabolism; 4-hydroxyphenylacetate degradation; pyruvate and succinate semialdehyde from 4-hydroxyphenylacetate: step 4/7. Its pathway is aromatic compound metabolism; 4-hydroxyphenylacetate degradation; pyruvate and succinate semialdehyde from 4-hydroxyphenylacetate: step 5/7. Its function is as follows. Decarboxylates OPET (5-oxo-pent-3-ene-1,2,5-tricarboxylic acid) into HHDD (2-hydroxy-hept-2,4-diene-1,7-dioate) and isomerizes it to OHED (2-oxo-hept-3-ene-1,7-dioate). This chain is 4-hydroxyphenylacetate degradation bifunctional isomerase/decarboxylase (hpaG), found in Salmonella dublin.